Here is a 761-residue protein sequence, read N- to C-terminus: Protein ACTIVITY OF BC1 COMPLEX KINASE 8, chloroplastic (761 aa).

The transit peptide at 1–57 (MATSSSSSSSLLLPNINFNSRQSPTITRSVSIAGIFLPRNRLSYNHNLRIRTRLIRA) directs the protein to the chloroplast. Residues 288–648 (RFDYEPIAAA…VKDLRKRWDR (361 aa)) form the Protein kinase domain. Residues 294–302 (IAAASLGQV) and K315 each bind ATP. The active-site Proton acceptor is D452. A helical membrane pass occupies residues 725 to 745 (PATIAYTVCAFFSLQVLIGII).

It belongs to the protein kinase superfamily. ADCK protein kinase family. In terms of tissue distribution, mostly expressed in leaves and flowers, and, to a lower extent, in stems, siliques and roots.

It is found in the plastid. It localises to the chloroplast envelope. The protein resides in the chloroplast membrane. It catalyses the reaction L-seryl-[protein] + ATP = O-phospho-L-seryl-[protein] + ADP + H(+). The enzyme catalyses L-threonyl-[protein] + ATP = O-phospho-L-threonyl-[protein] + ADP + H(+). In terms of biological role, involved in resistance to oxidative stress (e.g. hydrogen peroxide H(2)O(2)), high light and heavy metals (e.g. cadmium ions Cd(2+)). Influences responses to reactive oxygen species (ROS) production. Together with SIA1, regulates iron distribution within the chloroplast and mediates the oxidative stress response. Together with ABC1K7, influences chloroplast lipid synthesis/accumulation and modulates chloroplast membrane composition in response to stress. This chain is Protein ACTIVITY OF BC1 COMPLEX KINASE 8, chloroplastic, found in Arabidopsis thaliana (Mouse-ear cress).